The following is a 464-amino-acid chain: Argininosuccinate lyase (464 aa).

The protein belongs to the lyase 1 family. Argininosuccinate lyase subfamily.

Its subcellular location is the cytoplasm. It catalyses the reaction 2-(N(omega)-L-arginino)succinate = fumarate + L-arginine. Its pathway is amino-acid biosynthesis; L-arginine biosynthesis; L-arginine from L-ornithine and carbamoyl phosphate: step 3/3. This is Argininosuccinate lyase from Azotobacter vinelandii (strain DJ / ATCC BAA-1303).